A 300-amino-acid chain; its full sequence is Tyrosine phosphatase-like protein J1 (300 aa).

The Tyrosine-protein phosphatase domain maps to 27–294 (LKREHEHIMQ…IFCYFTVLQF (268 aa)).

This sequence belongs to the protein-tyrosine phosphatase family.

In Microplitis demolitor (Parasitoid wasp), this protein is Tyrosine phosphatase-like protein J1 (J1).